Reading from the N-terminus, the 686-residue chain is tRNA wybutosine-synthesizing protein 4 (686 aa).

A compositionally biased stretch (basic and acidic residues) spans 1-10 (MGPRSRERRA). The interval 1 to 21 (MGPRSRERRAGAVQNTNDSSA) is disordered. Residues R59, G89, D114, 161 to 162 (DL), and E188 each bind S-adenosyl-L-methionine.

Belongs to the methyltransferase superfamily. LCMT family. In terms of assembly, interacts with RNF144B/IBRDC2.

It catalyses the reaction 7-[(3S)-3-amino-3-carboxypropyl]wyosine(37) in tRNA(Phe) + S-adenosyl-L-methionine = 7-[(3S)-(3-amino-3-methoxycarbonyl)propyl]wyosine(37) in tRNA(Phe) + S-adenosyl-L-homocysteine. The enzyme catalyses 7-[(3S)-(3-amino-3-methoxycarbonyl)propyl]wyosine(37) in tRNA(Phe) + S-adenosyl-L-methionine + CO2 = wybutosine(37) in tRNA(Phe) + S-adenosyl-L-homocysteine + 2 H(+). The protein operates within tRNA modification; wybutosine-tRNA(Phe) biosynthesis. Its function is as follows. Probable S-adenosyl-L-methionine-dependent methyltransferase that acts as a component of the wybutosine biosynthesis pathway. Wybutosine is a hyper modified guanosine with a tricyclic base found at the 3'-position adjacent to the anticodon of eukaryotic phenylalanine tRNA. May methylate the carboxyl group of leucine residues to form alpha-leucine ester residues. This Homo sapiens (Human) protein is tRNA wybutosine-synthesizing protein 4 (LCMT2).